The chain runs to 89 residues: Dynein light chain 1, cytoplasmic (89 aa).

Belongs to the dynein light chain family. As to quaternary structure, interacts with spn-F. Forms ternary complexes with spn-F and IKKepsilon. As to expression, ubiquitous.

It is found in the cytoplasm. The protein resides in the cytoskeleton. Acts as a non-catalytic accessory component of a dynein complex. The chain is Dynein light chain 1, cytoplasmic (ctp) from Drosophila melanogaster (Fruit fly).